Reading from the N-terminus, the 239-residue chain is Tumor necrosis factor ligand superfamily member 14 (239 aa).

Topologically, residues 1-37 (MESVVQPSVFVVDGQTDIPFRRLEQNHRRRRCGTVQV) are cytoplasmic. A helical; Signal-anchor for type II membrane protein membrane pass occupies residues 38 to 58 (SLALVLLLGAGLATQGWFLLR). The Extracellular portion of the chain corresponds to 59–239 (LHQRLGDIVA…TRSYFGAFMV (181 aa)). A THD domain is found at 92 to 239 (PAAHLTGANA…TRSYFGAFMV (148 aa)). N-linked (GlcNAc...) asparagine glycosylation occurs at N100. C152 and C187 are oxidised to a cystine. An N-linked (GlcNAc...) asparagine glycan is attached at N191.

The protein belongs to the tumor necrosis factor family. Homotrimer. Interacts with TNFRSF14. The soluble form derives from the membrane form by proteolytic processing.

The protein localises to the cell membrane. It is found in the secreted. In terms of biological role, cytokine that binds to TNFRSF3/LTBR. Binding to the decoy receptor TNFRSF6B modulates its effects. Activates NFKB and stimulates the proliferation of T-cells. Acts as a ligand for TNFRSF14/HVEM. Upon binding to TNFRSF14/HVEM, delivers costimulatory signals to T cells, leading to T cell proliferation and IFNG production. This is Tumor necrosis factor ligand superfamily member 14 (Tnfsf14) from Mus musculus (Mouse).